Reading from the N-terminus, the 716-residue chain is MALTAALKAQIAAWYKALQEQIPDFIPRAPQRQMIADVAKTLAGEEGRHLAIEAPTGVGKTLSYLIPGIAIAREEQKTLVVSTANVALQDQIYSKDLPLLKKIIPDLKFTAAFGRGRYVCPRNLTALASTEPTQQDLLAFLDDELTPNNQEEQKRCAKLKGDLDTYKWDGLRDHTDIAIDDDLWRRLSTDKASCLNRNCYYYRECPFFVARREIQEAEVVVANHALVMAAMESEAVLPDPKNLLLVLDEGHHLPDVARDALEMSAEITAPWYRLQLDLFTKLVATCMEQFRPKTIPPLAIPERLNAHCEELYELIASLNNILNLYMPAGQEAEHRFAMGELPDEVLEICQRLAKLTEMLRGLAELFLNDLSEKTGSHDIVRLHRLILQMNRALGMFEAQSKLWRLASLAQSSGAPVTKWATREEREGQLHLWFHCVGIRVSDQLERLLWRSIPHIIVTSATLRSLNSFSRLQEMSGLKEKAGDRFVALDSPFNHCEQGKIVIPRMRVEPSIDNEEQHIAEMAAFFREQVESKKHLGMLVLFASGRAMQRFLDYVTDLRLMLLVQGDQPRYRLVELHRKRVANGERSVLVGLQSFAEGLDLKGDMLSQVHIHKIAFPPIDSPVVITEGEWLKSLNRYPFEVQSLPSASFNLIQQVGRLIRSHGCWGEVVIYDKRLLTKNYGKRLLDALPVFPIEQPEVPEGIVKKKEKTKSPRRRRR.

In terms of domain architecture, Helicase ATP-binding spans 17-294 (ALQEQIPDFI…TCMEQFRPKT (278 aa)). 54-61 (APTGVGKT) provides a ligand contact to ATP. Cys-120 serves as a coordination point for [4Fe-4S] cluster. The DEAH box signature appears at 131 to 134 (EPTQ). [4Fe-4S] cluster contacts are provided by Cys-194, Cys-199, and Cys-205. Residues 248–251 (DEGH) carry the DEAH box motif. The 182-residue stretch at 517 to 698 (HIAEMAAFFR…VFPIEQPEVP (182 aa)) folds into the Helicase C-terminal domain.

This sequence belongs to the helicase family. DinG subfamily. Type 1 sub-subfamily. [4Fe-4S] cluster is required as a cofactor.

The catalysed reaction is Couples ATP hydrolysis with the unwinding of duplex DNA at the replication fork by translocating in the 5'-3' direction. This creates two antiparallel DNA single strands (ssDNA). The leading ssDNA polymer is the template for DNA polymerase III holoenzyme which synthesizes a continuous strand.. It catalyses the reaction ATP + H2O = ADP + phosphate + H(+). Its function is as follows. DNA-dependent ATPase and 5'-3' DNA helicase. Unwinds D-loops, R-loops, forked DNA and G-quadruplex DNA. This is ATP-dependent DNA helicase DinG from Escherichia coli O157:H7.